The sequence spans 777 residues: Histone-lysine N-methyltransferase set9 (777 aa).

One can recognise an SET domain in the interval 117–231 (CPFEVNATNR…VGEEITVTYS (115 aa)). Disordered regions lie at residues 263–414 (AVQK…ILSP) and 682–718 (RMGSKGKQGSSAPSTKGTPAGEKNEQSAKQEQSQGQY). Residues 291–301 (TALQASRTPSV) show a composition bias toward polar residues. Positions 323-337 (TSTTDSAAQGAGADG) are enriched in low complexity. Composition is skewed to polar residues over residues 371-405 (TAPSRGSSDNETSKSPLSFSTTNDNVTDATSQGSE) and 688-698 (KQGSSAPSTKG).

It belongs to the class V-like SAM-binding methyltransferase superfamily. Histone-lysine methyltransferase family. Suvar4-20 subfamily.

The protein resides in the nucleus. It is found in the chromosome. It catalyses the reaction L-lysyl(20)-[histone H4] + 3 S-adenosyl-L-methionine = N(6),N(6),N(6)-trimethyl-L-lysyl(20)-[histone H4] + 3 S-adenosyl-L-homocysteine + 3 H(+). Its function is as follows. Histone methyltransferase that trimethylates 'Lys-20' of histone H4 to form H4K20me3. This is Histone-lysine N-methyltransferase set9 (hlm-1) from Neurospora crassa (strain ATCC 24698 / 74-OR23-1A / CBS 708.71 / DSM 1257 / FGSC 987).